The sequence spans 307 residues: Nicotinamide/nicotinic acid mononucleotide adenylyltransferase 2 (307 aa).

Serine 16 and phenylalanine 17 together coordinate NAD(+). Histidine 24 contributes to the ATP binding site. Residues tryptophan 92 and threonine 95 each contribute to the NAD(+) site. S-palmitoyl cysteine attachment occurs at residues cysteine 164 and cysteine 165. Positions 200, 202, 212, 213, and 232 each coordinate NAD(+). 271 to 274 (TKSR) lines the ATP pocket.

Belongs to the eukaryotic NMN adenylyltransferase family. In terms of assembly, monomer. The cofactor is Mg(2+). Degraded in response to injured neurite. Degradation is caused by polyubiquitination by MYCBP2 after recognition by FBXO45. In terms of processing, palmitoylated; palmitoylation is required for membrane association.

The protein resides in the golgi apparatus membrane. It localises to the cytoplasmic vesicle membrane. Its subcellular location is the cytoplasm. The protein localises to the cell projection. It is found in the axon. It carries out the reaction beta-nicotinamide D-ribonucleotide + ATP + H(+) = diphosphate + NAD(+). The catalysed reaction is nicotinate beta-D-ribonucleotide + ATP + H(+) = deamido-NAD(+) + diphosphate. The protein operates within cofactor biosynthesis; NAD(+) biosynthesis; NAD(+) from nicotinamide D-ribonucleotide: step 1/1. Its pathway is cofactor biosynthesis; NAD(+) biosynthesis; deamido-NAD(+) from nicotinate D-ribonucleotide: step 1/1. Its activity is regulated as follows. Inhibited by P1-(adenosine-5')-P3-(nicotinamide-riboside-5')-triphosphate (Np3AD) and P1-(adenosine-5')-P4-(nicotinamide-riboside-5')-tetraphosphate (Np4AD). Nicotinamide/nicotinate-nucleotide adenylyltransferase that acts as an axon maintenance factor. Axon survival factor required for the maintenance of healthy axons: acts by delaying Wallerian axon degeneration, an evolutionarily conserved process that drives the loss of damaged axons. Catalyzes the formation of NAD(+) from nicotinamide mononucleotide (NMN) and ATP. Can also use the deamidated form; nicotinic acid mononucleotide (NaMN) as substrate but with a lower efficiency. Cannot use triazofurin monophosphate (TrMP) as substrate. Also catalyzes the reverse reaction, i.e. the pyrophosphorolytic cleavage of NAD(+). For the pyrophosphorolytic activity prefers NAD(+), NADH and NaAD as substrates and degrades nicotinic acid adenine dinucleotide phosphate (NHD) less effectively. Fails to cleave phosphorylated dinucleotides NADP(+), NADPH and NaADP(+). Also acts as an activator of ADP-ribosylation by supporting the catalytic activity of PARP16 and promoting mono-ADP-ribosylation of ribosomes by PARP16. May be involved in the maintenance of axonal integrity. In Pongo abelii (Sumatran orangutan), this protein is Nicotinamide/nicotinic acid mononucleotide adenylyltransferase 2 (NMNAT2).